Reading from the N-terminus, the 199-residue chain is MASSSTNSPCAACKFLRRKCQPECVFAPYFPPDQPQKFANVHKVFGASNVTKLLNELHPSQREDAVNSLAYEADMRLRDPVYGCVGVISLLQHQLRQLQIDLSCAKSELSKYQSLGILAATHQSLGINLLAGAADGTATAVRDHYHHHQFFPREQMFGGLDVPAGNNYDGGILAIGQITQFQQPRAAAGDDGRRTVDPS.

One can recognise an LOB domain in the interval 8-109 (SPCAACKFLR…IDLSCAKSEL (102 aa)).

Belongs to the LOB domain-containing protein family. As to quaternary structure, homo- and heterodimer with AS1. Interacts with AS1. Part of the AS1 repressor complex composed of AS1, LBD6/AS2 and HDA6. Interacts with LFR. In terms of tissue distribution, expressed in young shoots, roots, stems, leaves, flowers and adaxial domains of cotyledonary and leaves primordia.

Its subcellular location is the nucleus. Functionally, negative regulator of cell proliferation in the adaxial side of leaves. Regulates the formation of a symmetric lamina and the establishment of venation. Positively regulates LATERAL ORGAN BOUNDARIES (LOB) within the shoot apex, and the class III HD-ZIP genes REV, PHB, and PHV. Interacts directly with ASYMMETRIC LEAVES 1 (AS1) to repress the knox homeobox genes KNAT1, KNAT2, and KNAT6 and the abaxial determinants ARF3, KAN2 and YAB5. May act in parallel with the RDR6-SGS3-AGO7 pathway, an endogenous RNA silencing pathway, to regulate the leaf morphogenesis. Required for the binding of AS1 to the KNOX genes. Involved in leaf polarity establishment by functioning cooperatively with RH10 or RID2 to repress abaxial genes ARF3, ARF4, KAN1, KAN2, YAB1 and YAB5, and the knox homeobox genes KNAT1, KNAT2, KNAT6, and STM to promote adaxial development in leaf primordia at shoot apical meristems at high temperatures. The polypeptide is Protein ASYMMETRIC LEAVES 2 (Arabidopsis thaliana (Mouse-ear cress)).